The following is a 445-amino-acid chain: Phosphoglucosamine mutase (445 aa).

Ser-99 (phosphoserine intermediate) is an active-site residue. Mg(2+) contacts are provided by Ser-99, Asp-242, Asp-244, and Asp-246. The residue at position 99 (Ser-99) is a Phosphoserine.

It belongs to the phosphohexose mutase family. It depends on Mg(2+) as a cofactor. Post-translationally, activated by phosphorylation.

The enzyme catalyses alpha-D-glucosamine 1-phosphate = D-glucosamine 6-phosphate. Functionally, catalyzes the conversion of glucosamine-6-phosphate to glucosamine-1-phosphate. The sequence is that of Phosphoglucosamine mutase from Nitratiruptor sp. (strain SB155-2).